The chain runs to 194 residues: Cysteine and glycine-rich protein 3 (194 aa).

The interaction with TCAP stretch occupies residues 1 to 5 (MPNWG). One can recognise an LIM zinc-binding 1 domain in the interval 10–61 (CGACEKTVYHAEEIQCNGRSFHKTCFHCMACRKALDSTTVAAHESEIYCKVC). The Nuclear localization signal signature appears at 64–69 (RRYGPK). An interaction with CLF2 region spans residues 94-106 (QSPKQARSATTSS). Phosphoserine occurs at positions 95 and 153. An LIM zinc-binding 2 domain is found at 120-171 (CPRCGKSVYAAEKVMGGGKPWHKTCFRCAICGKSLESTNVTDKDGELYCKVC).

As to quaternary structure, self-associates. Oligomeric in the cytoplasm and monomeric in the nucleus. Homooligomers preferentially form along the actin cytoskeleton. Interacts with TCAP, LDHD, MYOD1, MYOG, ACTN2, NRAP, MYF6. Interacts (via N-terminus) with GLRX3 (via C-terminus) and PPP3CA; GLRX3 and calcineurin compete for interaction with CSRP3. Interacts with CFL2; the stoichiometry influences F-actin depolymerization and possibly two molecules of CFL2 can interact with one molecule of CSRP3 resulting in the highest functional impact; the interaction is stronger with phosphorylated CFL2.

The protein resides in the nucleus. Its subcellular location is the cytoplasm. It is found in the cytoskeleton. It localises to the myofibril. The protein localises to the sarcomere. The protein resides in the z line. Positive regulator of myogenesis. Acts as a cofactor for myogenic bHLH transcription factors such as MYOD1, and probably MYOG and MYF6. Enhances the DNA-binding activity of the MYOD1:TCF3 isoform E47 complex and may promote formation of a functional MYOD1:TCF3 isoform E47:MEF2A complex involved in myogenesis. Plays a crucial and specific role in the organization of cytosolic structures in cardiomyocytes. Could play a role in mechanical stretch sensing. May be a scaffold protein that promotes the assembly of interacting proteins at Z-line structures. It is essential for calcineurin anchorage to the Z line. Required for stress-induced calcineurin-NFAT activation. The role in regulation of cytoskeleton dynamics by association with CFL2 is reported conflictingly. Proposed to contribute to the maintenance of muscle cell integrity through an actin-based mechanism. Can directly bind to actin filaments, cross-link actin filaments into bundles without polarity selectivity and protect them from dilution- and cofilin-mediated depolymerization; the function seems to involve its self-association. In vitro can inhibit PKC/PRKCA activity. Proposed to be involved in cardiac stress signaling by down-regulating excessive PKC/PRKCA signaling. The chain is Cysteine and glycine-rich protein 3 (CSRP3) from Bos taurus (Bovine).